A 429-amino-acid chain; its full sequence is Adenylosuccinate synthetase (429 aa).

GTP is bound by residues 12–18 and 40–42; these read GDEGKGK and GHT. The active-site Proton acceptor is the aspartate 13. Positions 13 and 40 each coordinate Mg(2+). IMP-binding positions include 13–16, 38–41, threonine 128, arginine 142, glutamine 223, threonine 238, and arginine 302; these read DEGK and NAGH. The active-site Proton donor is the histidine 41. 298-304 is a binding site for substrate; the sequence is TTTGRPR. Residues arginine 304, 330-332, and 412-414 each bind GTP; these read SID and SVG.

The protein belongs to the adenylosuccinate synthetase family. Homodimer. Requires Mg(2+) as cofactor.

It localises to the cytoplasm. It carries out the reaction IMP + L-aspartate + GTP = N(6)-(1,2-dicarboxyethyl)-AMP + GDP + phosphate + 2 H(+). The protein operates within purine metabolism; AMP biosynthesis via de novo pathway; AMP from IMP: step 1/2. Its function is as follows. Plays an important role in the de novo pathway of purine nucleotide biosynthesis. Catalyzes the first committed step in the biosynthesis of AMP from IMP. The polypeptide is Adenylosuccinate synthetase (Bacillus thuringiensis (strain Al Hakam)).